Consider the following 244-residue polypeptide: Gasdermin-like protein rcd-1-2 (244 aa).

Positions 1–22 are disordered; it reads MDNEEWFPLKQTHYPPPTIPSM.

Belongs to the gasdermin family. As to quaternary structure, heterooligomer; the heterooligomer with rcd-1-1 forms a ring-shaped pore complex when inserted in the membrane.

The protein resides in the cytoplasm. It is found in the cell membrane. In terms of biological role, gasdermin-like protein involved in heterokaryon incompatibility, a process that ensures that during spontaneous vegetative cell fusion, only compatible cells from the same colony survive (non-self-recognition). In N.crassa, the rcd-1 locus exists as 2 incompatible alleles, rcd-1-1 (AC Q7SBA0) and rcd-1-2 (this entry). During the allorecognition process, forms a heterooligomer with rcd-1-1, thereby forming a functional gasdermin-like complex that binds to membranes and forms pores, triggering cell death. Binds negatively charged phospholipids, such as cardiolipin and phosphatidylserine. Also binds to phosphoinositides, preferentially to phosphatidylinositol-3-phosphate (PtdIns-3-P), PtdIns-5-P and PtdIns-3,5-P2. The polypeptide is Gasdermin-like protein rcd-1-2 (Neurospora crassa).